The following is a 340-amino-acid chain: Glycerol-3-phosphate dehydrogenase [NAD(P)+] (340 aa).

3 residues coordinate NADPH: W11, R33, and K110. Sn-glycerol 3-phosphate-binding residues include K110, G144, and S146. An NADPH-binding site is contributed by A148. The sn-glycerol 3-phosphate site is built by K199, D252, S262, R263, and N264. K199 functions as the Proton acceptor in the catalytic mechanism. R263 serves as a coordination point for NADPH. Positions 287 and 289 each coordinate NADPH.

It belongs to the NAD-dependent glycerol-3-phosphate dehydrogenase family.

Its subcellular location is the cytoplasm. It catalyses the reaction sn-glycerol 3-phosphate + NAD(+) = dihydroxyacetone phosphate + NADH + H(+). The catalysed reaction is sn-glycerol 3-phosphate + NADP(+) = dihydroxyacetone phosphate + NADPH + H(+). It functions in the pathway membrane lipid metabolism; glycerophospholipid metabolism. In terms of biological role, catalyzes the reduction of the glycolytic intermediate dihydroxyacetone phosphate (DHAP) to sn-glycerol 3-phosphate (G3P), the key precursor for phospholipid synthesis. In Polynucleobacter necessarius subsp. necessarius (strain STIR1), this protein is Glycerol-3-phosphate dehydrogenase [NAD(P)+].